The following is a 118-amino-acid chain: Probable FK506-binding protein (118 aa).

The PPIase FKBP-type domain occupies 33–118; that stretch reads GGEVEVHYVG…LVFIIDLISA (86 aa).

Belongs to the FKBP-type PPIase family.

It catalyses the reaction [protein]-peptidylproline (omega=180) = [protein]-peptidylproline (omega=0). Its function is as follows. PPIases accelerate the folding of proteins. In Corynebacterium glutamicum (strain ATCC 13032 / DSM 20300 / JCM 1318 / BCRC 11384 / CCUG 27702 / LMG 3730 / NBRC 12168 / NCIMB 10025 / NRRL B-2784 / 534), this protein is Probable FK506-binding protein.